Here is a 369-residue protein sequence, read N- to C-terminus: 4-hydroxy-3-methylbut-2-en-1-yl diphosphate synthase (flavodoxin) (369 aa).

[4Fe-4S] cluster is bound by residues C270, C273, C305, and E312.

It belongs to the IspG family. It depends on [4Fe-4S] cluster as a cofactor.

The enzyme catalyses (2E)-4-hydroxy-3-methylbut-2-enyl diphosphate + oxidized [flavodoxin] + H2O + 2 H(+) = 2-C-methyl-D-erythritol 2,4-cyclic diphosphate + reduced [flavodoxin]. The protein operates within isoprenoid biosynthesis; isopentenyl diphosphate biosynthesis via DXP pathway; isopentenyl diphosphate from 1-deoxy-D-xylulose 5-phosphate: step 5/6. Its function is as follows. Converts 2C-methyl-D-erythritol 2,4-cyclodiphosphate (ME-2,4cPP) into 1-hydroxy-2-methyl-2-(E)-butenyl 4-diphosphate. The chain is 4-hydroxy-3-methylbut-2-en-1-yl diphosphate synthase (flavodoxin) from Psychromonas ingrahamii (strain DSM 17664 / CCUG 51855 / 37).